The following is a 188-amino-acid chain: Ribosome maturation factor RimP (188 aa).

The protein belongs to the RimP family.

It is found in the cytoplasm. In terms of biological role, required for maturation of 30S ribosomal subunits. The chain is Ribosome maturation factor RimP from Corynebacterium aurimucosum (strain ATCC 700975 / DSM 44827 / CIP 107346 / CN-1) (Corynebacterium nigricans).